A 335-amino-acid chain; its full sequence is 2,4-dienoyl-CoA reductase [(3E)-enoyl-CoA-producing], mitochondrial (335 aa).

The transit peptide at 1–34 directs the protein to the mitochondrion; it reads MALLGRAFFAGVSRLPCDPGPQRFFSFGTKTLYQ. N6-acetyllysine; alternate is present on residues Lys-42 and Lys-49. 2 positions are modified to N6-succinyllysine; alternate: Lys-42 and Lys-49. 66-71 lines the NADP(+) pocket; sequence GGGTGL. Thr-69 carries the phosphothreonine modification. An N6-succinyllysine modification is found at Lys-73. Arg-91 serves as a coordination point for NADP(+). Position 91 (Arg-91) interacts with substrate. N6-acetyllysine; alternate is present on residues Lys-97 and Lys-106. An N6-succinyllysine; alternate mark is found at Lys-97 and Lys-106. Residue Asp-117 participates in NADP(+) binding. Residues Arg-119 and Phe-149 each coordinate substrate. Tyr-199 (proton acceptor) is an active-site residue. NADP(+)-binding positions include Lys-214 and 240–243; that span reads PGPI. The residue at position 244 (Lys-244) is an N6-acetyllysine; alternate. Lys-244 carries the post-translational modification N6-succinyllysine; alternate. Arg-251 is a binding site for substrate. Lys-260 carries the post-translational modification N6-acetyllysine; alternate. At Lys-260 the chain carries N6-succinyllysine; alternate. At Lys-315 the chain carries N6-acetyllysine. Lys-319 carries the N6-acetyllysine; alternate modification. At Lys-319 the chain carries N6-succinyllysine; alternate.

This sequence belongs to the short-chain dehydrogenases/reductases (SDR) family. 2,4-dienoyl-CoA reductase subfamily. Homotetramer.

The protein resides in the mitochondrion. It catalyses the reaction a (2E,4E)-dienoyl-CoA + NADPH + H(+) = a 4,5-saturated-(3E)-enoyl-CoA + NADP(+). The enzyme catalyses a (2E,4Z)-dienoyl-CoA + NADPH + H(+) = a 4,5-saturated-(3E)-enoyl-CoA + NADP(+). It carries out the reaction (2E,4E)-hexadienoyl-CoA + NADPH + H(+) = (3E)-hexenoyl-CoA + NADP(+). Functionally, auxiliary enzyme of beta-oxidation. It participates in the metabolism of unsaturated fatty enoyl-CoA esters having double bonds in both even- and odd-numbered positions in mitochondria. Catalyzes the NADP-dependent reduction of 2,4-dienoyl-CoA to yield trans-3-enoyl-CoA. This Mus musculus (Mouse) protein is 2,4-dienoyl-CoA reductase [(3E)-enoyl-CoA-producing], mitochondrial (Decr1).